We begin with the raw amino-acid sequence, 70 residues long: uncharacterized protein (70 aa).

Residues 50–70 (FYLLVFFIILWVSREAFFYLI) form a helical membrane-spanning segment.

The protein belongs to the M.jannaschii MJ0023/MJ0349/MJ1072/MJ1074/MJ1107/MJECL16 family.

The protein localises to the membrane. This is an uncharacterized protein from Methanocaldococcus jannaschii (strain ATCC 43067 / DSM 2661 / JAL-1 / JCM 10045 / NBRC 100440) (Methanococcus jannaschii).